Here is a 425-residue protein sequence, read N- to C-terminus: Serine hydroxymethyltransferase 2 (425 aa).

Residues L121 and 125 to 127 (GHL) each bind (6S)-5,6,7,8-tetrahydrofolate. K230 carries the post-translational modification N6-(pyridoxal phosphate)lysine.

It belongs to the SHMT family. Homodimer. Requires pyridoxal 5'-phosphate as cofactor.

It localises to the cytoplasm. The enzyme catalyses (6R)-5,10-methylene-5,6,7,8-tetrahydrofolate + glycine + H2O = (6S)-5,6,7,8-tetrahydrofolate + L-serine. The protein operates within one-carbon metabolism; tetrahydrofolate interconversion. It participates in amino-acid biosynthesis; glycine biosynthesis; glycine from L-serine: step 1/1. Its function is as follows. Catalyzes the reversible interconversion of serine and glycine with tetrahydrofolate (THF) serving as the one-carbon carrier. This reaction serves as the major source of one-carbon groups required for the biosynthesis of purines, thymidylate, methionine, and other important biomolecules. Also exhibits THF-independent aldolase activity toward beta-hydroxyamino acids, producing glycine and aldehydes, via a retro-aldol mechanism. This chain is Serine hydroxymethyltransferase 2, found in Mycobacterium tuberculosis (strain CDC 1551 / Oshkosh).